The sequence spans 441 residues: EP1-like glycoprotein 3 (441 aa).

The N-terminal stretch at 1–22 (MKFSITLALCFTLSIFLIGSQA) is a signal peptide. One can recognise a Bulb-type lectin domain in the interval 29–159 (QFRVVNEGGY…SGKFVWQSFD (131 aa)). N-linked (GlcNAc...) asparagine glycans are attached at residues asparagine 102, asparagine 258, and asparagine 269. One copy of the WD repeat lies at 254–296 (GSKFNVSTFLSRPKHNATLSFIRLESDGNIRVWSYSTLATSTA). The 78-residue stretch at 356-433 (CDPKTFHYFK…SSLVAYVKAP (78 aa)) folds into the PAN domain. Cystine bridges form between cysteine 387/cysteine 409 and cysteine 391/cysteine 397.

Post-translationally, phosphorylated on tyrosine.

It localises to the secreted. The protein localises to the cell wall. In terms of biological role, may be involved in a cell-to cell programmed cell death (PCD) signaling mechanism. This is EP1-like glycoprotein 3 from Arabidopsis thaliana (Mouse-ear cress).